The following is a 346-amino-acid chain: MRVEDFDFELPEELIAQTPLVDRTASRLMVVTPGSNEVEHQHFAHVLEELRTGDCLVLNDTRVLPARLMGVKEETGAHIEVLLLKQLPGTDEWETLVKPAKRVKVGTVITFGDGLLTATCTGELDHGGRTFEFHYDGIFFEILEQLGEMPLPPYIREKLEDKDRYQTVYAKERGSAAAPTAGLHFTEELLEQVKAKGVEVVFITLHVGLGTFRPVSVDSIENHEMHAEFYSVTEEAADTINRVKRNGGKIIAVGTTSTRTLETIGSKYDGEVRAEQGWTSIFIYPGYTFTVVDGLITNFHLPKSTLVMLVSTLATRETILSAYQQAVEEKYRFFSFGDAMFIRPKE.

This sequence belongs to the QueA family. As to quaternary structure, monomer.

Its subcellular location is the cytoplasm. It carries out the reaction 7-aminomethyl-7-carbaguanosine(34) in tRNA + S-adenosyl-L-methionine = epoxyqueuosine(34) in tRNA + adenine + L-methionine + 2 H(+). Its pathway is tRNA modification; tRNA-queuosine biosynthesis. Functionally, transfers and isomerizes the ribose moiety from AdoMet to the 7-aminomethyl group of 7-deazaguanine (preQ1-tRNA) to give epoxyqueuosine (oQ-tRNA). The sequence is that of S-adenosylmethionine:tRNA ribosyltransferase-isomerase from Lysinibacillus sphaericus (strain C3-41).